Reading from the N-terminus, the 701-residue chain is Protein mono-ADP-ribosyltransferase PARP12 (701 aa).

3 C3H1-type zinc fingers span residues leucine 94 to threonine 119, tryptophan 150 to histidine 179, and isoleucine 180 to serine 202. A disordered region spans residues lysine 234–serine 268. Serine 258 is subject to Phosphoserine. Positions serine 259–serine 268 are enriched in polar residues. C3H1-type zinc fingers lie at residues glutamate 270 to leucine 297 and glutamate 271 to histidine 296. 2 consecutive WWE domains span residues proline 298–threonine 361 and serine 364–arginine 458. Cysteine 474 carries the post-translational modification ADP-ribosylcysteine. Residues isoleucine 484–serine 698 form the PARP catalytic domain. ADP-ribosyl aspartic acid is present on residues aspartate 600 and aspartate 611.

It belongs to the ARTD/PARP family. Interacts with PARP11; this interaction plays a key role in zika virus suppression. Interacts with ISG15. Post-translationally, auto-mono-ADP-ribosylated. Phosphorylated by PRKD1.

The protein localises to the nucleus. Its subcellular location is the golgi apparatus. It is found in the trans-Golgi network. The protein resides in the cytoplasm. It localises to the stress granule. It catalyses the reaction L-aspartyl-[protein] + NAD(+) = 4-O-(ADP-D-ribosyl)-L-aspartyl-[protein] + nicotinamide. The enzyme catalyses L-cysteinyl-[protein] + NAD(+) = S-(ADP-D-ribosyl)-L-cysteinyl-[protein] + nicotinamide + H(+). Its function is as follows. Mono-ADP-ribosyltransferase that mediates mono-ADP-ribosylation of target proteins. Acts as an antiviral factor by cooperating with PARP11 to suppress Zika virus replication. Displays anti-alphavirus activity during IFN-gamma immune activation by directly ADP-ribosylating the alphaviral non-structural proteins nsP3 and nsP4. Acts as a component of the PRKD1-driven regulatory cascade that selectively controls a major branch of the basolateral transport pathway by catalyzing the MARylation of GOLGA1. Acts also as a key regulator of mitochondrial function, protein translation, and inflammation. Inhibits PINK1/Parkin-dependent mitophagy and promotes cartilage degeneration by inhibiting the ubiquitination and SUMOylation of MFN1/2 by upregulating ISG15 and ISGylation. This Homo sapiens (Human) protein is Protein mono-ADP-ribosyltransferase PARP12.